Consider the following 488-residue polypeptide: Bifunctional protein GlmU (488 aa).

The segment at 1 to 237 (MPRTRTPLAA…AEEASGVNDR (237 aa)) is pyrophosphorylase. Residues 13-16 (LAAG), lysine 27, glutamine 82, 87-88 (GT), 110-112 (SGD), glycine 149, glutamate 164, asparagine 179, and asparagine 235 contribute to the UDP-N-acetyl-alpha-D-glucosamine site. Residue aspartate 112 participates in Mg(2+) binding. Asparagine 235 contacts Mg(2+). The interval 238–258 (IELARANRVMVGRLAEAFMRA) is linker. Residues 259-488 (GVTIEDPARF…KGRPAARRAS (230 aa)) form an N-acetyltransferase region. Residues arginine 341 and lysine 359 each coordinate UDP-N-acetyl-alpha-D-glucosamine. Histidine 371 (proton acceptor) is an active-site residue. UDP-N-acetyl-alpha-D-glucosamine-binding residues include tyrosine 374 and asparagine 385. Residues alanine 388, 394 to 395 (NY), serine 413, alanine 431, and arginine 448 contribute to the acetyl-CoA site. The interval 459-488 (AQRQAEKQMKGTATGPAPARKGRPAARRAS) is disordered. Positions 478-488 (RKGRPAARRAS) are enriched in basic residues.

It in the N-terminal section; belongs to the N-acetylglucosamine-1-phosphate uridyltransferase family. In the C-terminal section; belongs to the transferase hexapeptide repeat family. In terms of assembly, homotrimer. Mg(2+) is required as a cofactor.

The protein localises to the cytoplasm. It carries out the reaction alpha-D-glucosamine 1-phosphate + acetyl-CoA = N-acetyl-alpha-D-glucosamine 1-phosphate + CoA + H(+). It catalyses the reaction N-acetyl-alpha-D-glucosamine 1-phosphate + UTP + H(+) = UDP-N-acetyl-alpha-D-glucosamine + diphosphate. It functions in the pathway nucleotide-sugar biosynthesis; UDP-N-acetyl-alpha-D-glucosamine biosynthesis; N-acetyl-alpha-D-glucosamine 1-phosphate from alpha-D-glucosamine 6-phosphate (route II): step 2/2. Its pathway is nucleotide-sugar biosynthesis; UDP-N-acetyl-alpha-D-glucosamine biosynthesis; UDP-N-acetyl-alpha-D-glucosamine from N-acetyl-alpha-D-glucosamine 1-phosphate: step 1/1. It participates in bacterial outer membrane biogenesis; LPS lipid A biosynthesis. Its function is as follows. Catalyzes the last two sequential reactions in the de novo biosynthetic pathway for UDP-N-acetylglucosamine (UDP-GlcNAc). The C-terminal domain catalyzes the transfer of acetyl group from acetyl coenzyme A to glucosamine-1-phosphate (GlcN-1-P) to produce N-acetylglucosamine-1-phosphate (GlcNAc-1-P), which is converted into UDP-GlcNAc by the transfer of uridine 5-monophosphate (from uridine 5-triphosphate), a reaction catalyzed by the N-terminal domain. This chain is Bifunctional protein GlmU, found in Anaeromyxobacter dehalogenans (strain 2CP-C).